Reading from the N-terminus, the 231-residue chain is RNA pyrophosphohydrolase (231 aa).

The region spanning 6–149 (GFRPNVGIIL…KRDVYQLALT (144 aa)) is the Nudix hydrolase domain. The Nudix box signature appears at 38–59 (GGIKYGETPEQAMYRELHEEIG). The disordered stretch occupies residues 168-200 (VHHGRHGSGQRYAQQPGQPPTLAQRRPLQPVTQ).

This sequence belongs to the Nudix hydrolase family. RppH subfamily. A divalent metal cation serves as cofactor.

Its function is as follows. Accelerates the degradation of transcripts by removing pyrophosphate from the 5'-end of triphosphorylated RNA, leading to a more labile monophosphorylated state that can stimulate subsequent ribonuclease cleavage. The polypeptide is RNA pyrophosphohydrolase (Cupriavidus pinatubonensis (strain JMP 134 / LMG 1197) (Cupriavidus necator (strain JMP 134))).